A 613-amino-acid chain; its full sequence is Dihydroxy-acid dehydratase (613 aa).

Position 81 (aspartate 81) interacts with Mg(2+). Cysteine 122 contacts [2Fe-2S] cluster. Mg(2+)-binding residues include aspartate 123 and lysine 124. Lysine 124 is subject to N6-carboxylysine. Cysteine 195 lines the [2Fe-2S] cluster pocket. Position 491 (glutamate 491) interacts with Mg(2+). The active-site Proton acceptor is serine 517.

This sequence belongs to the IlvD/Edd family. Homodimer. [2Fe-2S] cluster is required as a cofactor. The cofactor is Mg(2+).

The enzyme catalyses (2R)-2,3-dihydroxy-3-methylbutanoate = 3-methyl-2-oxobutanoate + H2O. It catalyses the reaction (2R,3R)-2,3-dihydroxy-3-methylpentanoate = (S)-3-methyl-2-oxopentanoate + H2O. It functions in the pathway amino-acid biosynthesis; L-isoleucine biosynthesis; L-isoleucine from 2-oxobutanoate: step 3/4. Its pathway is amino-acid biosynthesis; L-valine biosynthesis; L-valine from pyruvate: step 3/4. In terms of biological role, functions in the biosynthesis of branched-chain amino acids. Catalyzes the dehydration of (2R,3R)-2,3-dihydroxy-3-methylpentanoate (2,3-dihydroxy-3-methylvalerate) into 2-oxo-3-methylpentanoate (2-oxo-3-methylvalerate) and of (2R)-2,3-dihydroxy-3-methylbutanoate (2,3-dihydroxyisovalerate) into 2-oxo-3-methylbutanoate (2-oxoisovalerate), the penultimate precursor to L-isoleucine and L-valine, respectively. The protein is Dihydroxy-acid dehydratase of Hyphomonas neptunium (strain ATCC 15444).